The sequence spans 419 residues: MALSVIQACRSLALSTWLLSFCFVHLLCLDFTVAEKEEWYTAFVNITYVDPDTAEVRTEKTECGRYGEHSLKREARGVLAMPAAPHDRHACDPSGRFTPRAHGAWIALISRGNCTYKDKIRHAVGHNASAVVIFNVGSSNPNETITMPHQGISDVVAIMIPEPKGRELVLLMERNITVHMHITIGTRNLQKYVSRTSVVFVSISFIILMIISLAWLVFYYIQRFRYANARDRNQRRLGDAAKKAISQLQVRTIRKGDQETESDFDNCAVCIEGYKPNDVVRILPCRHLFHKCCVDPWLVDHRTCPMCKMNILKALGLTSSAECLNELPLDYELAVGGVALNAMVMSDDVMAGDVGGARDPGVRMGGLPQVLLDSEPLSQDTMPTEQSELQPIASGSSDVSLTTGAGHSDIDTPTDDPKC.

The signal sequence occupies residues 1-34 (MALSVIQACRSLALSTWLLSFCFVHLLCLDFTVA). The Extracellular portion of the chain corresponds to 35 to 197 (EKEEWYTAFV…NLQKYVSRTS (163 aa)). The 103-residue stretch at 70-172 (SLKREARGVL…PKGRELVLLM (103 aa)) folds into the PA domain. A helical membrane pass occupies residues 198–218 (VVFVSISFIILMIISLAWLVF). Residues 219 to 419 (YYIQRFRYAN…IDTPTDDPKC (201 aa)) are Cytoplasmic-facing. Residues 267-308 (CAVCIEGYKPNDVVRILPCRHLFHKCCVDPWLVDHRTCPMCK) form an RING-type; atypical zinc finger. Residues 374–419 (SEPLSQDTMPTEQSELQPIASGSSDVSLTTGAGHSDIDTPTDDPKC) are disordered. Residues 376–405 (PLSQDTMPTEQSELQPIASGSSDVSLTTGA) show a composition bias toward polar residues.

Its subcellular location is the membrane. The chain is RING finger protein 150 (rnf150) from Danio rerio (Zebrafish).